The following is a 114-amino-acid chain: Integration host factor subunit alpha (114 aa).

It belongs to the bacterial histone-like protein family. Heterodimer of an alpha and a beta chain.

Its function is as follows. This protein is one of the two subunits of integration host factor, a specific DNA-binding protein that functions in genetic recombination as well as in transcriptional and translational control. The sequence is that of Integration host factor subunit alpha from Afipia carboxidovorans (strain ATCC 49405 / DSM 1227 / KCTC 32145 / OM5) (Oligotropha carboxidovorans).